Reading from the N-terminus, the 384-residue chain is tRNA 2-selenouridine synthase (384 aa).

Positions 15–138 (FVAGKPLIDL…MRQYLIGVIE (124 aa)) constitute a Rhodanese domain. The active-site S-selanylcysteine intermediate is Cys-98.

The protein belongs to the SelU family. As to quaternary structure, monomer.

The catalysed reaction is 5-methylaminomethyl-2-thiouridine(34) in tRNA + selenophosphate + (2E)-geranyl diphosphate + H2O + H(+) = 5-methylaminomethyl-2-selenouridine(34) in tRNA + (2E)-thiogeraniol + phosphate + diphosphate. It catalyses the reaction 5-methylaminomethyl-2-thiouridine(34) in tRNA + (2E)-geranyl diphosphate = 5-methylaminomethyl-S-(2E)-geranyl-thiouridine(34) in tRNA + diphosphate. It carries out the reaction 5-methylaminomethyl-S-(2E)-geranyl-thiouridine(34) in tRNA + selenophosphate + H(+) = 5-methylaminomethyl-2-(Se-phospho)selenouridine(34) in tRNA + (2E)-thiogeraniol. The enzyme catalyses 5-methylaminomethyl-2-(Se-phospho)selenouridine(34) in tRNA + H2O = 5-methylaminomethyl-2-selenouridine(34) in tRNA + phosphate. Its function is as follows. Involved in the post-transcriptional modification of the uridine at the wobble position (U34) of tRNA(Lys), tRNA(Glu) and tRNA(Gln). Catalyzes the conversion of 2-thiouridine (S2U-RNA) to 2-selenouridine (Se2U-RNA). Acts in a two-step process involving geranylation of 2-thiouridine (S2U) to S-geranyl-2-thiouridine (geS2U) and subsequent selenation of the latter derivative to 2-selenouridine (Se2U) in the tRNA chain. This is tRNA 2-selenouridine synthase from Shewanella sp. (strain MR-4).